The chain runs to 28 residues: Omega-agatoxin-Aa2a (28 aa).

This sequence belongs to the neurotoxin 04 (omega-agtx) family. 03 (type II/III omega-agtx) subfamily. Expressed by the venom gland.

It localises to the secreted. Omega-agatoxin are antagonist of voltage-gated calcium channels. They block insect neuromuscular transmission presynaptically. Potent blocker of N-type calcium channels (Cav2.2/CACNA1B). The polypeptide is Omega-agatoxin-Aa2a (Agelenopsis aperta (North American funnel-web spider)).